The sequence spans 1420 residues: DNA-directed RNA polymerase subunit beta'' (1420 aa).

Residues Cys220, Cys295, Cys302, and Cys305 each coordinate Zn(2+).

Belongs to the RNA polymerase beta' chain family. RpoC2 subfamily. In plastids the minimal PEP RNA polymerase catalytic core is composed of four subunits: alpha, beta, beta', and beta''. When a (nuclear-encoded) sigma factor is associated with the core the holoenzyme is formed, which can initiate transcription. Zn(2+) serves as cofactor.

The protein localises to the plastid. It is found in the chloroplast. The catalysed reaction is RNA(n) + a ribonucleoside 5'-triphosphate = RNA(n+1) + diphosphate. Its function is as follows. DNA-dependent RNA polymerase catalyzes the transcription of DNA into RNA using the four ribonucleoside triphosphates as substrates. The protein is DNA-directed RNA polymerase subunit beta'' of Adiantum capillus-veneris (Maidenhair fern).